A 353-amino-acid chain; its full sequence is Phosphoribosylformylglycinamidine cyclo-ligase (353 aa).

It belongs to the AIR synthase family.

The protein resides in the cytoplasm. It carries out the reaction 2-formamido-N(1)-(5-O-phospho-beta-D-ribosyl)acetamidine + ATP = 5-amino-1-(5-phospho-beta-D-ribosyl)imidazole + ADP + phosphate + H(+). It functions in the pathway purine metabolism; IMP biosynthesis via de novo pathway; 5-amino-1-(5-phospho-D-ribosyl)imidazole from N(2)-formyl-N(1)-(5-phospho-D-ribosyl)glycinamide: step 2/2. In Pseudomonas aeruginosa (strain LESB58), this protein is Phosphoribosylformylglycinamidine cyclo-ligase.